Reading from the N-terminus, the 101-residue chain is UPF0235 protein MMP1055 (101 aa).

This sequence belongs to the UPF0235 family.

This chain is UPF0235 protein MMP1055, found in Methanococcus maripaludis (strain DSM 14266 / JCM 13030 / NBRC 101832 / S2 / LL).